A 90-amino-acid polypeptide reads, in one-letter code: uncharacterized protein (90 aa).

The disordered stretch occupies residues 53-90; sequence WRARPDANDADTTSSSSSSETCTESDDSSDVPPARYAV. Over residues 63 to 74 the composition is skewed to low complexity; it reads DTTSSSSSSETC.

This is an uncharacterized protein from Orgyia pseudotsugata (Douglas-fir tussock moth).